A 21-amino-acid polypeptide reads, in one-letter code: Peptide PGLa-R6 (21 aa).

Leu-21 is modified (leucine amide).

As to expression, expressed by the skin glands.

The protein resides in the secreted. Its function is as follows. Antimicrobial peptide. This is Peptide PGLa-R6 from Xenopus ruwenzoriensis (Uganda clawed frog).